A 229-amino-acid polypeptide reads, in one-letter code: Urease accessory protein UreF (229 aa).

The protein belongs to the UreF family. As to quaternary structure, ureD, UreF and UreG form a complex that acts as a GTP-hydrolysis-dependent molecular chaperone, activating the urease apoprotein by helping to assemble the nickel containing metallocenter of UreC. The UreE protein probably delivers the nickel.

The protein localises to the cytoplasm. Functionally, required for maturation of urease via the functional incorporation of the urease nickel metallocenter. The polypeptide is Urease accessory protein UreF (Staphylococcus aureus (strain USA300)).